The sequence spans 254 residues: Type III pantothenate kinase (254 aa).

6–13 is a binding site for ATP; it reads DVGNTNIV. Substrate contacts are provided by residues F100 and 107 to 110; that span reads GADR. D109 functions as the Proton acceptor in the catalytic mechanism. D129 is a binding site for K(+). T132 provides a ligand contact to ATP. Position 184 (T184) interacts with substrate.

It belongs to the type III pantothenate kinase family. As to quaternary structure, homodimer. NH4(+) serves as cofactor. It depends on K(+) as a cofactor.

Its subcellular location is the cytoplasm. The catalysed reaction is (R)-pantothenate + ATP = (R)-4'-phosphopantothenate + ADP + H(+). It participates in cofactor biosynthesis; coenzyme A biosynthesis; CoA from (R)-pantothenate: step 1/5. In terms of biological role, catalyzes the phosphorylation of pantothenate (Pan), the first step in CoA biosynthesis. The sequence is that of Type III pantothenate kinase from Moorella thermoacetica (strain ATCC 39073 / JCM 9320).